Here is a 773-residue protein sequence, read N- to C-terminus: MIRDLSKMYPQTRHPAPHQPAQPFKFTISESCDRIKEEFQFLQAQYHSLKLECEKLASEKTEMQRHYVMYYEMSYGLNIEMHKQAEIVKRLNAICAQVIPFLSQEHQQQVVQAVERAKQVTMAELNAIIGQQLQAQHLSHGHGLPVPLTPHPSGLQPPAIPPIGSSAGLLALSSALGGQSHLPIKDEKKHHDNDHQRDRDSIKSSSVSPSASFRGAEKHRNSADYSSESKKQKTEEKEIAARYDSDGEKSDDNLVVDVSNEDPSSPRGSPAHSPRENGLDKTRLLKKDAPISPASIASSSSTPSSKSKELSLNEKSTTPVSKSNTPTPRTDAPTPGSNSTPGLRPVPGKPPGVDPLASSLRTPMAVPCPYPTPFGIVPHAGMNGELTSPGAAYAGLHNISPQMSAAAAAAAAAAAYGRSPVVGFDPHHHMRVPAIPPNLTGIPGGKPAYSFHVSADGQMQPVPFPPDALIGPGIPRHARQINTLNHGEVVCAVTISNPTRHVYTGGKGCVKVWDISHPGNKSPVSQLDCLNRDNYIRSCRLLPDGRTLIVGGEASTLSIWDLAAPTPRIKAELTSSAPACYALAISPDSKVCFSCCSDGNIAVWDLHNQTLVRQFQGHTDGASCIDISNDGTKLWTGGLDNTVRSWDLREGRQLQQHDFTSQIFSLGYCPTGEWLAVGMENSNVEVLHVTKPDKYQLHLHESCVLSLKFAHCGKWFVSTGKDNLLNAWRTPYGASIFQSKESSSVLSCDISVDDKYIVTGSGDKKATVYEVIY.

Disordered stretches follow at residues 1-22 (MIRD…QPAQ), 140-162 (HGHG…AIPP), and 182-360 (LPIK…ASSL). Residues 1-136 (MIRDLSKMYP…AIIGQQLQAQ (136 aa)) are q domain. Residues 137 to 204 (HLSHGHGLPV…HQRDRDSIKS (68 aa)) form a GP domain region. Residues 183-202 (PIKDEKKHHDNDHQRDRDSI) are compositionally biased toward basic and acidic residues. Over residues 203-212 (KSSSVSPSAS) the composition is skewed to low complexity. A ccN domain region spans residues 205 to 274 (SSVSPSASFR…SPRGSPAHSP (70 aa)). Residues S208, S212, and S222 each carry the phosphoserine modification. Residues 215 to 252 (GAEKHRNSADYSSESKKQKTEEKEIAARYDSDGEKSDD) show a composition bias toward basic and acidic residues. K237 carries the N6-acetyllysine modification. S245, S250, S269, and S273 each carry phosphoserine. The span at 273–289 (SPRENGLDKTRLLKKDA) shows a compositional bias: basic and acidic residues. Positions 275 to 452 (RENGLDKTRL…PGGKPAYSFH (178 aa)) are SP domain. K281 is subject to N6-acetyllysine. Low complexity predominate over residues 290 to 305 (PISPASIASSSSTPSS). Residue S292 is modified to Phosphoserine. A compositionally biased stretch (polar residues) spans 317-328 (TTPVSKSNTPTP). A Phosphothreonine modification is found at T318. Residues S321 and S323 each carry the phosphoserine modification. A phosphothreonine mark is found at T325, T327, T334, and T340. A Phosphoserine modification is found at S419. WD repeat units follow at residues 485 to 523 (NHGE…NKSP), 531 to 570 (NRDN…PRIK), 575 to 614 (SSAP…LVRQ), 617 to 656 (GHTD…QLQQ), 658 to 697 (DFTS…KYQL), 699 to 738 (LHES…SIFQ), and 740 to 773 (KESS…EVIY).

The protein belongs to the WD repeat Groucho/TLE family. As to quaternary structure, homooligomer and heterooligomer with other family members. Interacts with PAX5. Interacts with LEF1, TCF7, TCF7L1 and TCF7L2. Interacts with ZNF703; TLE4 may mediate ZNF703 transcriptional repression. Interacts with SIX3 and SIX6. Interacts with PAX2. Interacts with TLE1. Post-translationally, phosphorylated. PAX5 binding increases phosphorylation. In terms of processing, ubiquitinated by XIAP/BIRC4. In terms of tissue distribution, in all tissues examined, mostly in brain, and muscle.

The protein resides in the nucleus. Transcriptional corepressor that binds to a number of transcription factors. Inhibits the transcriptional activation mediated by PAX5, and by CTNNB1 and TCF family members in Wnt signaling. The effects of full-length TLE family members may be modulated by association with dominant-negative AES. Essential for the transcriptional repressor activity of SIX3 during retina and lens development and for SIX3 transcriptional auto-repression. Involved in transcriptional repression of GNRHR and enhances MSX1-mediated transcriptional repression of CGA/alpha-GSU. This Homo sapiens (Human) protein is Transducin-like enhancer protein 4 (TLE4).